Here is a 494-residue protein sequence, read N- to C-terminus: Glutamyl-tRNA(Gln) amidotransferase subunit A (494 aa).

Residues Lys81 and Ser156 each act as charge relay system in the active site. Ser180 serves as the catalytic Acyl-ester intermediate.

It belongs to the amidase family. GatA subfamily. As to quaternary structure, heterotrimer of A, B and C subunits.

The enzyme catalyses L-glutamyl-tRNA(Gln) + L-glutamine + ATP + H2O = L-glutaminyl-tRNA(Gln) + L-glutamate + ADP + phosphate + H(+). Allows the formation of correctly charged Gln-tRNA(Gln) through the transamidation of misacylated Glu-tRNA(Gln) in organisms which lack glutaminyl-tRNA synthetase. The reaction takes place in the presence of glutamine and ATP through an activated gamma-phospho-Glu-tRNA(Gln). The protein is Glutamyl-tRNA(Gln) amidotransferase subunit A of Mycobacterium tuberculosis (strain ATCC 25177 / H37Ra).